The following is a 379-amino-acid chain: tRNA(Met) cytidine acetate ligase (379 aa).

Residues 8 to 21 (IAEF…HEYL), Gly97, Asn153, and Arg176 contribute to the ATP site.

Belongs to the TmcAL family.

Its subcellular location is the cytoplasm. The catalysed reaction is cytidine(34) in elongator tRNA(Met) + acetate + ATP = N(4)-acetylcytidine(34) in elongator tRNA(Met) + AMP + diphosphate. In terms of biological role, catalyzes the formation of N(4)-acetylcytidine (ac(4)C) at the wobble position of elongator tRNA(Met), using acetate and ATP as substrates. First activates an acetate ion to form acetyladenylate (Ac-AMP) and then transfers the acetyl group to tRNA to form ac(4)C34. The protein is tRNA(Met) cytidine acetate ligase of Lactococcus lactis subsp. cremoris (strain MG1363).